The sequence spans 274 residues: Purine nucleoside phosphorylase 1 (274 aa).

Phosphate contacts are provided by residues Ser29, His60, 80-82, and Ala112; that span reads RFH. Ser29 carries the phosphoserine modification. Glu192 serves as a coordination point for a purine D-ribonucleoside. Ser211 is a phosphate binding site. Asn234 lines the a purine D-ribonucleoside pocket.

Belongs to the PNP/MTAP phosphorylase family. As to quaternary structure, homotrimer.

The enzyme catalyses a purine D-ribonucleoside + phosphate = a purine nucleobase + alpha-D-ribose 1-phosphate. It carries out the reaction a purine 2'-deoxy-D-ribonucleoside + phosphate = a purine nucleobase + 2-deoxy-alpha-D-ribose 1-phosphate. It functions in the pathway purine metabolism; purine nucleoside salvage. The purine nucleoside phosphorylases catalyze the phosphorolytic breakdown of the N-glycosidic bond in the beta-(deoxy)ribonucleoside molecules, with the formation of the corresponding free purine bases and pentose-1-phosphate. Cleaves guanosine, inosine, 2'-deoxyguanosine and 2'-deoxyinosine. The protein is Purine nucleoside phosphorylase 1 (punA) of Geobacillus stearothermophilus (Bacillus stearothermophilus).